The sequence spans 148 residues: Glutamyl-tRNA(Gln) amidotransferase subunit C, mitochondrial (148 aa).

It belongs to the GatC family. As to quaternary structure, subunit of the heterotrimeric GatCAB amidotransferase (AdT) complex, composed of A, B and C subunits.

It localises to the mitochondrion. It catalyses the reaction L-glutamyl-tRNA(Gln) + L-glutamine + ATP + H2O = L-glutaminyl-tRNA(Gln) + L-glutamate + ADP + phosphate + H(+). Its function is as follows. Allows the formation of correctly charged Gln-tRNA(Gln) through the transamidation of misacylated Glu-tRNA(Gln) in the mitochondria. The reaction takes place in the presence of glutamine and ATP through an activated gamma-phospho-Glu-tRNA(Gln). This is Glutamyl-tRNA(Gln) amidotransferase subunit C, mitochondrial from Drosophila yakuba (Fruit fly).